A 173-amino-acid polypeptide reads, in one-letter code: Cytochrome c-type biogenesis protein CcmE (173 aa).

Residues 1–7 (MTRKSRR) are Cytoplasmic-facing. Residues 8 to 28 (LILIAACGAVLALALGLILSA) traverse the membrane as a helical; Signal-anchor for type II membrane protein segment. Topologically, residues 29–173 (MSGSIVFFRS…DATLGQRSER (145 aa)) are periplasmic. Residues His122 and Tyr126 each coordinate heme. Positions 134-173 (ALKAQGRWQEGGGKDASKAAPKDAAKPETADATLGQRSER) are disordered. A compositionally biased stretch (basic and acidic residues) spans 145-162 (GGKDASKAAPKDAAKPET).

This sequence belongs to the CcmE/CycJ family.

Its subcellular location is the cell inner membrane. Heme chaperone required for the biogenesis of c-type cytochromes. Transiently binds heme delivered by CcmC and transfers the heme to apo-cytochromes in a process facilitated by CcmF and CcmH. This Methylorubrum extorquens (strain CM4 / NCIMB 13688) (Methylobacterium extorquens) protein is Cytochrome c-type biogenesis protein CcmE.